The chain runs to 345 residues: V-type proton ATPase subunit d (345 aa).

Residue M1 is modified to N-acetylmethionine.

Belongs to the V-ATPase V0D/AC39 subunit family. In terms of assembly, V-ATPase is a heteromultimeric enzyme composed of a peripheral catalytic V1 complex (components A to H) attached to an integral membrane V0 proton pore complex (components: a, c, c', c'', d, e, f and VOA1).

It localises to the vacuole membrane. Subunit of the V0 complex of vacuolar(H+)-ATPase (V-ATPase), a multisubunit enzyme composed of a peripheral complex (V1) that hydrolyzes ATP and a membrane integral complex (V0) that translocates protons. V-ATPase is responsible for acidifying and maintaining the pH of intracellular compartments. This subunit is a non-integral membrane component of the membrane pore domain and is required for proper assembly of the V0 sector. Might be involved in the regulated assembly of V1 subunits onto the membrane sector or alternatively may prevent the passage of protons through V0 pores. This Saccharomyces cerevisiae (strain ATCC 204508 / S288c) (Baker's yeast) protein is V-type proton ATPase subunit d.